The sequence spans 804 residues: Elongation factor G, mitochondrial (804 aa).

The N-terminal 63 residues, M1–R63, are a transit peptide targeting the mitochondrion. The tr-type G domain occupies R99–A385. GTP contacts are provided by residues A108 to T115, D183 to H187, and N237 to D240.

The protein belongs to the TRAFAC class translation factor GTPase superfamily. Classic translation factor GTPase family. EF-G/EF-2 subfamily.

It is found in the mitochondrion. It participates in protein biosynthesis; polypeptide chain elongation. Mitochondrial GTPase that catalyzes the GTP-dependent ribosomal translocation step during translation elongation. During this step, the ribosome changes from the pre-translocational (PRE) to the post-translocational (POST) state as the newly formed A-site-bound peptidyl-tRNA and P-site-bound deacylated tRNA move to the P and E sites, respectively. Catalyzes the coordinated movement of the two tRNA molecules, the mRNA and conformational changes in the ribosome. In Sclerotinia sclerotiorum (strain ATCC 18683 / 1980 / Ss-1) (White mold), this protein is Elongation factor G, mitochondrial (mef1).